The primary structure comprises 1071 residues: ATP-dependent helicase/deoxyribonuclease subunit B (1071 aa).

Belongs to the helicase family. AddB/RexB type 2 subfamily. In terms of assembly, heterodimer of AddA and RexB. Mg(2+) serves as cofactor.

Its function is as follows. The heterodimer acts as both an ATP-dependent DNA helicase and an ATP-dependent, dual-direction single-stranded exonuclease. Recognizes the chi site generating a DNA molecule suitable for the initiation of homologous recombination. This subunit has 5' -&gt; 3' nuclease activity but not helicase activity. This Streptococcus pyogenes serotype M6 (strain ATCC BAA-946 / MGAS10394) protein is ATP-dependent helicase/deoxyribonuclease subunit B.